Reading from the N-terminus, the 1481-residue chain is Coiled-coil domain-containing protein 88B (1481 aa).

Coiled coils occupy residues glutamate 200 to aspartate 225 and serine 258 to histidine 491. 3 disordered regions span residues glutamate 430–valine 458, leucine 494–glutamate 731, and proline 1331–glutamine 1481. Serine 441 bears the Phosphoserine mark. Polar residues-rich tracts occupy residues alanine 542–proline 557 and glutamine 568–threonine 590. Phosphoserine is present on serine 649. The span at threonine 660 to glutamate 695 shows a compositional bias: basic and acidic residues. Positions glutamate 731–glutamate 1308 form a coiled coil. A phosphoserine mark is found at serine 1353 and serine 1384. The span at threonine 1371 to leucine 1386 shows a compositional bias: polar residues. Residues leucine 1453–lysine 1472 are compositionally biased toward basic and acidic residues.

The protein belongs to the CCDC88 family. In terms of assembly, homodimer. Interacts with DOCK8. Interacts (via C-terminus) with intact microtubules. Interacts with dynein-dynactin motor complex. Interacts (via C-terminus) with HSPA5. Abundantly expressed in immune cells, including both CD4(+) and CD8(+) T-cells and in myeloid cells (at protein level). Expressed in endothelium (at protein level). Expressed specifically in spleen, bone marrow, lymph nodes and thymus. Expressed in liver and heart.

It localises to the membrane. The protein resides in the cytoplasm. It is found in the cytoskeleton. The protein localises to the microtubule organizing center. Its subcellular location is the endoplasmic reticulum. It localises to the golgi apparatus. In terms of biological role, acts as a positive regulator of T-cell maturation and inflammatory function. Required for several functions of T-cells in both the CD4(+) and the CD8(+) compartments and this includes expression of cell surface markers of activation, proliferation, and cytokine production in response to specific or non-specific stimulation and during the course of infection with the mouse malaria parasite Plasmodium berghei. Enhances NK cell cytotoxicity by positively regulating polarization of microtubule-organizing center (MTOC) to cytotoxic synapse, lytic granule transport along microtubules, and dynein-mediated clustering to MTOC. Interacts with HSPA5 and stabilizes the interaction between HSPA5 and ERN1, leading to suppression of ERN1-induced JNK activation and endoplasmic reticulum stress-induced apoptosis. The chain is Coiled-coil domain-containing protein 88B (Ccdc88b) from Mus musculus (Mouse).